A 140-amino-acid chain; its full sequence is 3-hydroxyacyl-[acyl-carrier-protein] dehydratase FabZ (140 aa).

Residue H47 is part of the active site.

It belongs to the thioester dehydratase family. FabZ subfamily.

The protein localises to the cytoplasm. It catalyses the reaction a (3R)-hydroxyacyl-[ACP] = a (2E)-enoyl-[ACP] + H2O. In terms of biological role, involved in unsaturated fatty acids biosynthesis. Catalyzes the dehydration of short chain beta-hydroxyacyl-ACPs and long chain saturated and unsaturated beta-hydroxyacyl-ACPs. The polypeptide is 3-hydroxyacyl-[acyl-carrier-protein] dehydratase FabZ (Streptococcus pneumoniae (strain 70585)).